Here is a 180-residue protein sequence, read N- to C-terminus: NAD(P)H-quinone oxidoreductase subunit I, chloroplastic (180 aa).

4Fe-4S ferredoxin-type domains follow at residues glycine 55 to lysine 84 and leucine 95 to glutamate 124. [4Fe-4S] cluster is bound by residues cysteine 64, cysteine 67, cysteine 70, cysteine 74, cysteine 104, cysteine 107, cysteine 110, and cysteine 114.

This sequence belongs to the complex I 23 kDa subunit family. In terms of assembly, NDH is composed of at least 16 different subunits, 5 of which are encoded in the nucleus. The cofactor is [4Fe-4S] cluster.

It is found in the plastid. It localises to the chloroplast thylakoid membrane. It carries out the reaction a plastoquinone + NADH + (n+1) H(+)(in) = a plastoquinol + NAD(+) + n H(+)(out). The catalysed reaction is a plastoquinone + NADPH + (n+1) H(+)(in) = a plastoquinol + NADP(+) + n H(+)(out). NDH shuttles electrons from NAD(P)H:plastoquinone, via FMN and iron-sulfur (Fe-S) centers, to quinones in the photosynthetic chain and possibly in a chloroplast respiratory chain. The immediate electron acceptor for the enzyme in this species is believed to be plastoquinone. Couples the redox reaction to proton translocation, and thus conserves the redox energy in a proton gradient. In Sorghum bicolor (Sorghum), this protein is NAD(P)H-quinone oxidoreductase subunit I, chloroplastic.